We begin with the raw amino-acid sequence, 667 residues long: Protein MAIN-LIKE 2 (667 aa).

Met1 is modified (N-acetylmethionine). Over residues 492–508 (MRGKERVRRKGMGKRRK) the composition is skewed to basic residues. Disordered stretches follow at residues 492–523 (MRGK…EDES) and 594–667 (KLQE…TVVA). Positions 512–523 (PMEDYGGSEDES) are enriched in acidic residues. 2 stretches are compositionally biased toward basic and acidic residues: residues 608–618 (YDVKKEDKESK) and 656–667 (SLDRRGENTVVA).

Expressed in root tips, the shoot apical meristem (SAM), leaves, mature flowers and embryos.

Its subcellular location is the nucleus. Its function is as follows. Maybe required to maintain cell division activity in meristematic cells. In Arabidopsis thaliana (Mouse-ear cress), this protein is Protein MAIN-LIKE 2.